Here is a 392-residue protein sequence, read N- to C-terminus: V-type proton ATPase subunit C (392 aa).

Alanine 2 carries the post-translational modification N-acetylalanine.

The protein belongs to the V-ATPase C subunit family. In terms of assembly, V-ATPase is a heteromultimeric enzyme composed of a peripheral catalytic V1 complex (components A to H) attached to an integral membrane V0 proton pore complex (components: a, c, c', c'', d, e, f and VOA1). Interacts directly with VMA4.

It localises to the vacuole membrane. Functionally, subunit of the V1 complex of vacuolar(H+)-ATPase (V-ATPase), a multisubunit enzyme composed of a peripheral complex (V1) that hydrolyzes ATP and a membrane integral complex (V0) that translocates protons. V-ATPase is responsible for acidifying and maintaining the pH of intracellular compartments. Subunit C is necessary for the assembly of the catalytic sector of the enzyme and is likely to have a specific function in its catalytic activity. Reversibly leaves the enzyme after glucose depletion, causing the catalytic subcomplex V1 to detach from the V0 section. In Saccharomyces cerevisiae (strain ATCC 204508 / S288c) (Baker's yeast), this protein is V-type proton ATPase subunit C.